The primary structure comprises 438 residues: Trigger factor (438 aa).

The 86-residue stretch at 163 to 248 (GDKLNIDFEG…VKRIETTEAR (86 aa)) folds into the PPIase FKBP-type domain.

Belongs to the FKBP-type PPIase family. Tig subfamily.

It is found in the cytoplasm. The enzyme catalyses [protein]-peptidylproline (omega=180) = [protein]-peptidylproline (omega=0). Involved in protein export. Acts as a chaperone by maintaining the newly synthesized protein in an open conformation. Functions as a peptidyl-prolyl cis-trans isomerase. The sequence is that of Trigger factor from Syntrophomonas wolfei subsp. wolfei (strain DSM 2245B / Goettingen).